The chain runs to 1475 residues: MPPPPLSLPLHGPAGAASVTFAGDEDVKKRVGKKLQKKRHEPTTPAVELPERLKEGDDAGEEDLVPTQGPPMFMNMNQSIFGLIAAAGSRVDFHDRFESSDDESADEGPQRDSADRSHSSSTHGLFLHRKQRRRDESDVAKTTVLNKDPYGSGKPEKHKRKISGHKLLRSLPALPRLPRHKSKKESSKLEPPSEEASDGSGFAQSQPVDEAEDDEDDKDHRLAPVMSRMLEAKAEMSARPSFDVERFSSDQLTYSESADSNDTALARRLQDIFEFDQPEAVIEEYPCWLLQSVLLQGYMYITAKHICFYSYLPKKALEVVKSGYLSKSGKRNPKYNRYWFRLKGDVLSYFKDPSNVYFPSGQIDLRYGISASVTDKKDGLNFTVVTHHRTYHFRADSAPSAKEWVKSLQRVIFRSHNEGDSVKISLPIENVIDIEDTQMLNFADTCKIRVIDNDETYAIDEYFFSFFSFGKEAISVLKILIEDASSTAKDAARLKAVQEEEDRQQQQQQQHPMQPPMQASARSSMSGSRRAIAPPKLTTNKLPEAVKATLSPMSAHSPSALSPRASMDAARASFDAFRSFRRRSLDLSTIIRDSSPRRSFSGNRRSMSRNRLDDQRRGPHQQGSTDSYVQSSMEEPSFSGMVASSIEDPSASQILRGSDVFQNPTMRRSGSASRTEVEKQQRRDPRSPPTLATYSGQHAATAGSLNDGDKQPVTPTLQSITKMGAFPLQRVGAFAEYLNNTSSKLGSMLATESMGYVEKVSGMWRGGRKHYDAPPEIKTDDEDLYEDAEGKIQTSMDRFRAHFALPETEKLQATYFGHILRVLPLYGKIYISDKSFCFRSLLPGTRTKLILPLKDIENVDKEKGFRFGYSGLVVVIRGHEEIFFEFGQAEVRDDCAVTLLQSLETTRYLEKIGDLDTEEREDEENAMAERDALKEARQTEEFHDHDVHLPKETSGVSDAPTILFDDPKASFLNFKPPQPLKITCLTIGSRGDVQPYIALCKGLLAEGHKPRIATHGEFKDWIEGHGIEFAKVEGDPGELMRLCIENGTFTWAFLREANSMFRGWLDELLVSAWEACKGSDLLIESPSAMAGIHIAEKLSIPYFRAFTMPWTRTRAYPHAFIMPEYKMGGAYNYMTYVMFDNVFWKATAHQVNRWRNNTLKLPNTSLEKMQPNKVPFLYNFSEYVVAPPLDFSDWIRVTGYWFLDEGSDWVPPQELTDFIAKARADEKKLVYVGFGSIIVNDTAKMTQEVIDAVLKADVRCILSKGWSDRMGKQGEEAVDQPVMPPEIHVIKSAPHDWLFSQIDAAAHHGGSGTTGASLRAGIPTIIRPFFGDQFFFGSRVEDIGVGICLKKWGAISFARALWEATHNDRMIVKARVLGEQIRSENGVDSAIQCIYRDMEYAKSLIKRKAGKNIQVEPDEDEESAEESWTFIGNDEPDPDMTTKKLSEMPTLPGSSDTKPLGTRIMRVSPSQQSVA.

Disordered stretches follow at residues 1–73 (MPPP…PPMF) and 94–218 (HDRF…EDDK). Residues 8 to 17 (LPLHGPAGAA) are compositionally biased toward low complexity. Residues 30–40 (RVGKKLQKKRH) show a composition bias toward basic residues. Over residues 108 to 118 (GPQRDSADRSH) the composition is skewed to basic and acidic residues. Residues 156–168 (EKHKRKISGHKLL) are compositionally biased toward basic residues. The GRAM 1 domain maps to 270–315 (QDIFEFDQPEAVIEEYPCWLLQSVLLQGYMYITAKHICFYSYLPKK). Residues 318–413 (EVVKSGYLSK…WVKSLQRVIF (96 aa)) form the PH domain. Disordered regions lie at residues 492 to 541 (ARLK…TTNK), 594 to 636 (SSPR…MEEP), and 653 to 715 (QILR…PVTP). Residues 505-531 (QQQQQQHPMQPPMQASARSSMSGSRRA) are compositionally biased toward low complexity. Composition is skewed to polar residues over residues 621-634 (QQGSTDSYVQSSME) and 653-674 (QILRGSDVFQNPTMRRSGSASR). Positions 675–686 (TEVEKQQRRDPR) are enriched in basic and acidic residues. A GRAM 2 domain is found at 798–901 (RFRAHFALPE…RDDCAVTLLQ (104 aa)). 11 residues coordinate UDP-alpha-D-glucose: Ser989, Arg990, Asp992, Ala1293, His1295, His1308, Ser1311, Gly1312, Thr1313, Asp1332, and Gln1333. Positions 1413-1475 (IQVEPDEDEE…RVSPSQQSVA (63 aa)) are disordered. The segment covering 1416-1425 (EPDEDEESAE) has biased composition (acidic residues).

This sequence belongs to the glycosyltransferase 28 family.

It localises to the cytoplasm. Its subcellular location is the preautophagosomal structure membrane. The enzyme catalyses a sterol + UDP-alpha-D-glucose = a sterol 3-beta-D-glucoside + UDP + H(+). The catalysed reaction is ergosterol + UDP-alpha-D-glucose = ergosteryl 3-beta-D-glucoside + UDP + H(+). Functionally, sterol glycosyltransferase responsible for the glycosylation of ergosterol to form ergosterol-glucoside. Mediates autophagic degradation of peroxisomes (pexophagy) and is involved in pathogenesis via peroxisome degradation inside appressoria that are developing into the host invasion stage. The polypeptide is Sterol 3-beta-glucosyltransferase (Glomerella lagenarium (Anthracnose fungus)).